Here is a 212-residue protein sequence, read N- to C-terminus: Adenylate kinase (212 aa).

10 to 15 contributes to the ATP binding site; that stretch reads GAGKGT. Positions 30–59 are NMP; that stretch reads AIGDIFRTIIKTSTSEAELINNYVRQGELI. AMP-binding positions include R36, 57 to 59, 85 to 88, and Q92; these read ELI and GYPR. Residues 122–160 form an LID region; it reads GRYSCKNCGKIYNRYFLQPKTDNVCDVCGSSTFDYRKDD. Residue R123 participates in ATP binding. Residues C126 and C129 each contribute to the Zn(2+) site. 132 to 133 lines the ATP pocket; sequence IY. 2 residues coordinate Zn(2+): C146 and C149. Positions 157 and 168 each coordinate AMP. K196 contributes to the ATP binding site.

The protein belongs to the adenylate kinase family. In terms of assembly, monomer.

It is found in the cytoplasm. It catalyses the reaction AMP + ATP = 2 ADP. The protein operates within purine metabolism; AMP biosynthesis via salvage pathway; AMP from ADP: step 1/1. Functionally, catalyzes the reversible transfer of the terminal phosphate group between ATP and AMP. Plays an important role in cellular energy homeostasis and in adenine nucleotide metabolism. In Rickettsia peacockii (strain Rustic), this protein is Adenylate kinase.